Reading from the N-terminus, the 363-residue chain is DNA replication and repair protein RecF (363 aa).

30–37 (GSNGSGKT) provides a ligand contact to ATP.

Belongs to the RecF family.

It is found in the cytoplasm. Its function is as follows. The RecF protein is involved in DNA metabolism; it is required for DNA replication and normal SOS inducibility. RecF binds preferentially to single-stranded, linear DNA. It also seems to bind ATP. This is DNA replication and repair protein RecF from Photorhabdus laumondii subsp. laumondii (strain DSM 15139 / CIP 105565 / TT01) (Photorhabdus luminescens subsp. laumondii).